Reading from the N-terminus, the 179-residue chain is Cytochrome b6-f complex iron-sulfur subunit (179 aa).

The helical transmembrane segment at 21–43 threads the bilayer; that stretch reads LLTFGTVTGVALGALYPVVNYFI. The Rieske domain maps to 61–162; sequence GNDIIVSEFL…ANVSDDKLVF (102 aa). Residues Cys108, His110, Cys126, and His129 each contribute to the [2Fe-2S] cluster site. A disulfide bridge links Cys113 with Cys128.

The protein belongs to the Rieske iron-sulfur protein family. The 4 large subunits of the cytochrome b6-f complex are cytochrome b6, subunit IV (17 kDa polypeptide, PetD), cytochrome f and the Rieske protein, while the 4 small subunits are PetG, PetL, PetM and PetN. The complex functions as a dimer. The cofactor is [2Fe-2S] cluster.

The protein resides in the cellular thylakoid membrane. It catalyses the reaction 2 oxidized [plastocyanin] + a plastoquinol + 2 H(+)(in) = 2 reduced [plastocyanin] + a plastoquinone + 4 H(+)(out). Its function is as follows. Component of the cytochrome b6-f complex, which mediates electron transfer between photosystem II (PSII) and photosystem I (PSI), cyclic electron flow around PSI, and state transitions. The polypeptide is Cytochrome b6-f complex iron-sulfur subunit (Trichodesmium erythraeum (strain IMS101)).